The following is a 150-amino-acid chain: UPF0756 membrane protein Dd703_1075 (150 aa).

The next 4 membrane-spanning stretches (helical) occupy residues L8–L28, Y51–G71, A81–G101, and V114–V134.

This sequence belongs to the UPF0756 family.

It is found in the cell membrane. The chain is UPF0756 membrane protein Dd703_1075 from Musicola paradisiaca (strain Ech703) (Dickeya paradisiaca).